Reading from the N-terminus, the 213-residue chain is 3,4-dihydroxy-2-butanone 4-phosphate synthase (213 aa).

D-ribulose 5-phosphate-binding positions include 37–38 (RE), Asp42, 150–154 (RPGHT), and Glu174. Residue Glu38 coordinates Mg(2+). His153 contributes to the Mg(2+) binding site.

The protein belongs to the DHBP synthase family. As to quaternary structure, homodimer. It depends on Mg(2+) as a cofactor. The cofactor is Mn(2+).

It carries out the reaction D-ribulose 5-phosphate = (2S)-2-hydroxy-3-oxobutyl phosphate + formate + H(+). It participates in cofactor biosynthesis; riboflavin biosynthesis; 2-hydroxy-3-oxobutyl phosphate from D-ribulose 5-phosphate: step 1/1. Its function is as follows. Catalyzes the conversion of D-ribulose 5-phosphate to formate and 3,4-dihydroxy-2-butanone 4-phosphate. This is 3,4-dihydroxy-2-butanone 4-phosphate synthase from Clostridium botulinum (strain ATCC 19397 / Type A).